We begin with the raw amino-acid sequence, 149 residues long: 3-dehydroquinate dehydratase (149 aa).

The Proton acceptor role is filled by Tyr-25. The substrate site is built by Asn-76, His-82, and Asp-89. The Proton donor role is filled by His-102. Substrate-binding positions include 103–104 (LS) and Arg-113.

It belongs to the type-II 3-dehydroquinase family. As to quaternary structure, homododecamer.

The enzyme catalyses 3-dehydroquinate = 3-dehydroshikimate + H2O. The protein operates within metabolic intermediate biosynthesis; chorismate biosynthesis; chorismate from D-erythrose 4-phosphate and phosphoenolpyruvate: step 3/7. Its function is as follows. Catalyzes a trans-dehydration via an enolate intermediate. The protein is 3-dehydroquinate dehydratase of Acaryochloris marina (strain MBIC 11017).